We begin with the raw amino-acid sequence, 1399 residues long: DNA-directed RNA polymerase subunit beta' (1399 aa).

Positions 70, 72, 85, and 88 each coordinate Zn(2+). Mg(2+) is bound by residues D460, D462, and D464. Positions 814, 888, 895, and 898 each coordinate Zn(2+).

Belongs to the RNA polymerase beta' chain family. The RNAP catalytic core consists of 2 alpha, 1 beta, 1 beta' and 1 omega subunit. When a sigma factor is associated with the core the holoenzyme is formed, which can initiate transcription. The cofactor is Mg(2+). Requires Zn(2+) as cofactor.

It carries out the reaction RNA(n) + a ribonucleoside 5'-triphosphate = RNA(n+1) + diphosphate. In terms of biological role, DNA-dependent RNA polymerase catalyzes the transcription of DNA into RNA using the four ribonucleoside triphosphates as substrates. The protein is DNA-directed RNA polymerase subunit beta' of Pseudomonas putida (strain W619).